Reading from the N-terminus, the 538-residue chain is Carboxypeptidase 2 (538 aa).

The N-terminal stretch at M1–A21 is a signal peptide. N-linked (GlcNAc...) asparagine glycosylation occurs at N46. Residues P53–E76 form a disordered region. One can recognise a Peptidase M14 domain in the interval G71–A351. Zn(2+) is bound by residues H136, E139, and H224. The Proton donor/acceptor role is filled by E322. N393 and N459 each carry an N-linked (GlcNAc...) asparagine glycan.

The protein belongs to the peptidase M14 family. Zn(2+) is required as a cofactor.

It localises to the secreted. Functionally, extracellular metalloprotease that contributes to pathogenicity. The polypeptide is Carboxypeptidase 2 (MCPB) (Trichophyton equinum (Horse ringworm fungus)).